The primary structure comprises 364 residues: Putative agmatine deiminase (364 aa).

The Amidino-cysteine intermediate role is filled by Cys-355.

Belongs to the agmatine deiminase family.

It catalyses the reaction agmatine + H2O = N-carbamoylputrescine + NH4(+). The chain is Putative agmatine deiminase from Mycoplasma capricolum subsp. capricolum (strain California kid / ATCC 27343 / NCTC 10154).